A 129-amino-acid chain; its full sequence is Ribosome-binding factor A (129 aa).

Belongs to the RbfA family. As to quaternary structure, monomer. Binds 30S ribosomal subunits, but not 50S ribosomal subunits or 70S ribosomes.

The protein localises to the cytoplasm. Its function is as follows. One of several proteins that assist in the late maturation steps of the functional core of the 30S ribosomal subunit. Associates with free 30S ribosomal subunits (but not with 30S subunits that are part of 70S ribosomes or polysomes). Required for efficient processing of 16S rRNA. May interact with the 5'-terminal helix region of 16S rRNA. This is Ribosome-binding factor A from Stutzerimonas stutzeri (strain A1501) (Pseudomonas stutzeri).